The chain runs to 320 residues: Sucrose operon repressor (320 aa).

In terms of domain architecture, HTH lacI-type spans 1–55 (MKNIADIAKIAGVSKSTVSRYLNNGSVSLKTQQKLDEIIRENDYQPNQFAQSLRA). The segment at residues 4–23 (IADIAKIAGVSKSTVSRYLN) is a DNA-binding region (H-T-H motif).

Negative regulator of scrB expression. This chain is Sucrose operon repressor (scrR), found in Staphylococcus xylosus.